The following is a 529-amino-acid chain: MSNTPFLSEVSKRRTFAIISHPDAGKTTITEKVLLFGNAIQKAGTVKGRGNAQHAKSDWMEMEKERGISVTTSVMQFPYNDCLVNLLDTPGHEDFSEDTYRTLTAVDSCLMVIDAAKGVEDRTRKLMEVTRLRDTPIVTFMNKLDRDVRDPMEVLDEVENELGMMCAPITWPIGCGKEFKGVYHIHRDETILYESGHGHEIQEVRIIKGLDNPELDEKVGESLAASVREELELVMGACPEFDKELFLTGELTPVYFGTALGNFGVDHMLDGLTEWAPAPKTRQAVERDVEATEDKFSGFVFKIQANMDPKHRDRIAFMRIVSGTYTQGMKMNHVRLGKQVSISDAVTFMAGDRSRAEHAYAGDIIGLHNHGTIQIGDTFTQGESLKFSGIPNFAPELFRRIRLKDPLKQKQLLKGLVQLSEEGAVQVFRPLQNNDLIVGAVGVLQFDVVVARLKSEYNVEAIYEGVNVATARWVECGDAKKLDEFQRKNQANLALDGGDNLTYIAPTMVNLNLAKERFPDVEFRATREH.

One can recognise a tr-type G domain in the interval 11–280; it reads SKRRTFAIIS…GLTEWAPAPK (270 aa). GTP-binding positions include 20–27, 88–92, and 142–145; these read SHPDAGKT, DTPGH, and NKLD.

This sequence belongs to the TRAFAC class translation factor GTPase superfamily. Classic translation factor GTPase family. PrfC subfamily.

It is found in the cytoplasm. In terms of biological role, increases the formation of ribosomal termination complexes and stimulates activities of RF-1 and RF-2. It binds guanine nucleotides and has strong preference for UGA stop codons. It may interact directly with the ribosome. The stimulation of RF-1 and RF-2 is significantly reduced by GTP and GDP, but not by GMP. This chain is Peptide chain release factor 3, found in Vibrio parahaemolyticus serotype O3:K6 (strain RIMD 2210633).